We begin with the raw amino-acid sequence, 611 residues long: Chaperone protein HtpG (611 aa).

The tract at residues 1-326 is a; substrate-binding; that stretch reads MSETLERHAF…TEDLPLNVSR (326 aa). A b region spans residues 327–536; it reads EMLQATPVLA…SGGPDLQMQR (210 aa). Positions 537–611 are c; sequence LLRRAGRGFG…RVATALAAQG (75 aa).

The protein belongs to the heat shock protein 90 family. In terms of assembly, homodimer.

It is found in the cytoplasm. In terms of biological role, molecular chaperone. Has ATPase activity. This is Chaperone protein HtpG from Methylobacterium nodulans (strain LMG 21967 / CNCM I-2342 / ORS 2060).